The chain runs to 670 residues: NAD(P)H-quinone oxidoreductase subunit 5, chloroplastic (670 aa).

Transmembrane regions (helical) follow at residues 9–29, 39–59, 85–105, 120–140, 144–164, 188–208, 215–235, 258–278, 290–310, 327–347, 354–374, 395–415, 424–444, 479–499, 534–554, and 648–668; these read GLIP…LMSF, FVGS…LLFF, IGYL…SVAV, GYIR…GLIV, LIQV…LVGF, GLLL…FDII, LLLT…LLFL, TPIS…FLVA, LMIL…CLAV, LGYM…FHLI, ALLF…VGYD, GVTF…ACFW, AFFH…LTGF, MTLP…LGLP, SATS…LYSP, and LFVI…NSVF.

The protein belongs to the complex I subunit 5 family. NDH is composed of at least 16 different subunits, 5 of which are encoded in the nucleus.

The protein localises to the plastid. It is found in the chloroplast thylakoid membrane. It catalyses the reaction a plastoquinone + NADH + (n+1) H(+)(in) = a plastoquinol + NAD(+) + n H(+)(out). It carries out the reaction a plastoquinone + NADPH + (n+1) H(+)(in) = a plastoquinol + NADP(+) + n H(+)(out). Its function is as follows. NDH shuttles electrons from NAD(P)H:plastoquinone, via FMN and iron-sulfur (Fe-S) centers, to quinones in the photosynthetic chain and possibly in a chloroplast respiratory chain. The immediate electron acceptor for the enzyme in this species is believed to be plastoquinone. Couples the redox reaction to proton translocation, and thus conserves the redox energy in a proton gradient. The sequence is that of NAD(P)H-quinone oxidoreductase subunit 5, chloroplastic (ndhF) from Chaetosphaeridium globosum (Charophycean green alga).